We begin with the raw amino-acid sequence, 441 residues long: Cysteine proteinase (441 aa).

Cys-249 and Cys-290 form a disulfide bridge. The active site involves Cys-252. Asn-270 and Asn-345 each carry an N-linked (GlcNAc...) asparagine glycan. Residues His-381 and Asn-403 contribute to the active site.

It belongs to the peptidase C1 family.

This Theileria annulata protein is Cysteine proteinase (TACP).